The primary structure comprises 391 residues: Dual-specificity RNA methyltransferase RlmN (391 aa).

Catalysis depends on glutamate 112, which acts as the Proton acceptor. The region spanning 118-368 (ESDRGTLCIS…VRTPRGRDIL (251 aa)) is the Radical SAM core domain. A disulfide bond links cysteine 125 and cysteine 371. Residues cysteine 132, cysteine 136, and cysteine 139 each contribute to the [4Fe-4S] cluster site. Residues 197 to 198 (GE), serine 229, 251 to 253 (SLH), and asparagine 328 contribute to the S-adenosyl-L-methionine site. Catalysis depends on cysteine 371, which acts as the S-methylcysteine intermediate.

This sequence belongs to the radical SAM superfamily. RlmN family. The cofactor is [4Fe-4S] cluster.

The protein resides in the cytoplasm. The catalysed reaction is adenosine(2503) in 23S rRNA + 2 reduced [2Fe-2S]-[ferredoxin] + 2 S-adenosyl-L-methionine = 2-methyladenosine(2503) in 23S rRNA + 5'-deoxyadenosine + L-methionine + 2 oxidized [2Fe-2S]-[ferredoxin] + S-adenosyl-L-homocysteine. It carries out the reaction adenosine(37) in tRNA + 2 reduced [2Fe-2S]-[ferredoxin] + 2 S-adenosyl-L-methionine = 2-methyladenosine(37) in tRNA + 5'-deoxyadenosine + L-methionine + 2 oxidized [2Fe-2S]-[ferredoxin] + S-adenosyl-L-homocysteine. Its function is as follows. Specifically methylates position 2 of adenine 2503 in 23S rRNA and position 2 of adenine 37 in tRNAs. m2A2503 modification seems to play a crucial role in the proofreading step occurring at the peptidyl transferase center and thus would serve to optimize ribosomal fidelity. The protein is Dual-specificity RNA methyltransferase RlmN of Beijerinckia indica subsp. indica (strain ATCC 9039 / DSM 1715 / NCIMB 8712).